Here is a 211-residue protein sequence, read N- to C-terminus: Protein-L-isoaspartate O-methyltransferase (211 aa).

Ser62 is an active-site residue.

It belongs to the methyltransferase superfamily. L-isoaspartyl/D-aspartyl protein methyltransferase family.

The protein localises to the cytoplasm. It carries out the reaction [protein]-L-isoaspartate + S-adenosyl-L-methionine = [protein]-L-isoaspartate alpha-methyl ester + S-adenosyl-L-homocysteine. Functionally, catalyzes the methyl esterification of L-isoaspartyl residues in peptides and proteins that result from spontaneous decomposition of normal L-aspartyl and L-asparaginyl residues. It plays a role in the repair and/or degradation of damaged proteins. The sequence is that of Protein-L-isoaspartate O-methyltransferase from Shewanella halifaxensis (strain HAW-EB4).